Consider the following 409-residue polypeptide: MNVSAIVVEYNPMHNGHLYHIKKTKKLTNCDALVCIMSGNFVQRGFPSILDKWTKANIAISNGVDLVIELPTLYSLSSAEFFSFGAVSILDSLNIINSICFGSEIGNINALQDIATTLLEEPLEYKILLKNYLDKGISFAKARNLALVELNRDNKIMSENISKILSLSNNILGIEYLKSLLLLNSSIKPFTITREGADYKDENLHEEYSSASSIRKYLKENKNINILKDFLPLEGFLEFKRLITKGYNFSMEDSMINYIRYKYISGYKNLHNLIDVSEGLDNRIYKSLEKNFTYDSLVGEIKSKRYAYSRIGRILCQYFIGFENYDLNSLLKSTPNYMRVLASNEMGLKVLKKIKKHSSINIYTKLPKNTNTLLSLDIKATNAYSLLNNNIRFNEDYFRSPTIIKNTIY.

ATP-binding positions include 7–20 (VVEY…HLYH), Gly102, Asn169, and Arg194.

Belongs to the TmcAL family.

Its subcellular location is the cytoplasm. It catalyses the reaction cytidine(34) in elongator tRNA(Met) + acetate + ATP = N(4)-acetylcytidine(34) in elongator tRNA(Met) + AMP + diphosphate. Catalyzes the formation of N(4)-acetylcytidine (ac(4)C) at the wobble position of elongator tRNA(Met), using acetate and ATP as substrates. First activates an acetate ion to form acetyladenylate (Ac-AMP) and then transfers the acetyl group to tRNA to form ac(4)C34. The polypeptide is tRNA(Met) cytidine acetate ligase (Clostridium botulinum (strain Kyoto / Type A2)).